Reading from the N-terminus, the 188-residue chain is Ribosome-recycling factor (188 aa).

This sequence belongs to the RRF family.

It localises to the cytoplasm. In terms of biological role, responsible for the release of ribosomes from messenger RNA at the termination of protein biosynthesis. May increase the efficiency of translation by recycling ribosomes from one round of translation to another. The chain is Ribosome-recycling factor from Blochmanniella floridana.